Reading from the N-terminus, the 393-residue chain is Aspartate aminotransferase (393 aa).

G38, W124, and N174 together coordinate L-aspartate. K237 carries the N6-(pyridoxal phosphate)lysine modification.

The protein belongs to the class-I pyridoxal-phosphate-dependent aminotransferase family. As to quaternary structure, homodimer. Pyridoxal 5'-phosphate serves as cofactor.

It is found in the cytoplasm. The catalysed reaction is L-aspartate + 2-oxoglutarate = oxaloacetate + L-glutamate. The protein is Aspartate aminotransferase (aspC) of Geobacillus stearothermophilus (Bacillus stearothermophilus).